A 1278-amino-acid polypeptide reads, in one-letter code: Cytoplasmic FMR1-interacting protein 2 (1278 aa).

At K1062 the chain carries N6-acetyllysine.

The protein belongs to the CYFIP family. Component of the WAVE1 complex composed of ABI2, CYFIP2, BRK1, NCKAP1 and WASF1/WAVE1. Interacts with FMR1, FXR1 and FXR2. Interacts with FMR1 isoform 6; the interaction occurs in a RNA-dependent manner. Interacts with RAC1 (activated form) which causes the complex to dissociate, releasing activated WASF1. The complex can also be activated by NCK1. Interacts with SHANK3; the interaction mediates the association of SHANK3 with the WAVE1 complex. Interacts with TMEM108 (via N-terminus); the interaction associates TMEM108 with the WAVE1 complex. Expressed in T-cells. Increased expression is observed in CD4(+) T-lymphocytes from patients with multiple sclerosis (at protein level).

It is found in the cytoplasm. It localises to the nucleus. Its subcellular location is the perinuclear region. The protein resides in the synapse. The protein localises to the synaptosome. Involved in T-cell adhesion and p53/TP53-dependent induction of apoptosis. Does not bind RNA. As component of the WAVE1 complex, required for BDNF-NTRK2 endocytic trafficking and signaling from early endosomes. In Homo sapiens (Human), this protein is Cytoplasmic FMR1-interacting protein 2.